Here is a 185-residue protein sequence, read N- to C-terminus: Ubiquitin-fold modifier-conjugating enzyme 1 (185 aa).

Cysteine 119 acts as the Glycyl thioester intermediate in catalysis.

The protein belongs to the ubiquitin-conjugating enzyme family. UFC1 subfamily.

Its function is as follows. E2-like enzyme which forms an intermediate with UFM1 via a thioester linkage. The chain is Ubiquitin-fold modifier-conjugating enzyme 1 from Oryza sativa subsp. japonica (Rice).